Here is a 534-residue protein sequence, read N- to C-terminus: MGQRLNLVFWIFVSILAFLNFGMASKIGICYGRNADNLPSPNRVSELIQHLNIKFVRIYDANIDVLKAFANTGIELMIGVPNADLLAFAQFQSNVDTWLSNNILPYYPSTKITSISVGLEVTEAPDNATGLVLPAMRNIHTALKKSGLDKKIKISSSHSLAILSRSFPPSSASFSKKHSAFLKPMLEFLVENESPFMIDLYPYYAYRDSTEKVPLEYALFESSSQVVDPATGLLYSNMFDAQLDAIYFALTAMSFKTVKVMVTESGWPSKGSPKETAATPENALAYNTNLIRHVIGDPGTPAKPGEEIDVYLFSLFNENRKPGIESERNWGMFYANGTNVYALDFTGENTTPVSPTNSTTGTSPSPSSSPIINGNSTVTIGGGGGGGTKKWCIASSQASVTELQTALDWACGPGNVDCSAVQPDQPCFEPDTVLSHASYAFNTYYQQSGASSIDCSFNGASVEVDKDPSYGNCLYMIAPATDGFNRTMAGNITGNITAIDSPLASPSSTNEAFRQMVVAVSVLLPCFVVCSSIW.

The N-terminal stretch at 1–24 is a signal peptide; that stretch reads MGQRLNLVFWIFVSILAFLNFGMA. Catalysis depends on Glu120, which acts as the Proton donor. Asn127 carries an N-linked (GlcNAc...) asparagine glycan. Catalysis depends on Glu264, which acts as the Nucleophile. 3 N-linked (GlcNAc...) asparagine glycosylation sites follow: Asn336, Asn357, and Asn375. A disordered region spans residues 348–379; that stretch reads ENTTPVSPTNSTTGTSPSPSSSPIINGNSTVT. The segment covering 349–377 has biased composition (low complexity); that stretch reads NTTPVSPTNSTTGTSPSPSSSPIINGNST. A disulfide bridge connects residues Cys392 and Cys455. N-linked (GlcNAc...) asparagine glycans are attached at residues Asn485, Asn491, and Asn495. Residue Ser507 is the site of GPI-anchor amidated serine attachment. Positions 508–534 are cleaved as a propeptide — removed in mature form; it reads STNEAFRQMVVAVSVLLPCFVVCSSIW.

It belongs to the glycosyl hydrolase 17 family. In terms of processing, contains two additional disulfide bonds.

It is found in the secreted. The protein localises to the cell wall. Its subcellular location is the cell membrane. The enzyme catalyses Hydrolysis of (1-&gt;3)-beta-D-glucosidic linkages in (1-&gt;3)-beta-D-glucans.. The protein is Glucan endo-1,3-beta-glucosidase 12 of Arabidopsis thaliana (Mouse-ear cress).